The primary structure comprises 291 residues: MLTTAILFTSLAGSAYAHVAAFAPGMFCRGGNNPAVNDQDTNIAVNPLYNLPFSQWWMQADRGCNLAPPPAGEYLNLPAGGAFTVELAVNQAFTTLSWGGSRTTAWPDGGNHPDDWHGPDVGEGCLSDNPGGEGGALHTHNETTAAGTAWAISYEADIANVRLDNLVVFTTLEHTPFRRLATYQVPKDLPPCPPGGCYCAWLWVPKGCGEPNMYMQNYKCQVTGSTSTKRVSTPKPPVYCGDDSSKCVKGAKQMIAWHQLDGNNIVTAPGVFPGYNPTTGYTVGAQNDIFQ.

A signal peptide spans 1–17 (MLTTAILFTSLAGSAYA). Asparagine 141 carries an N-linked (GlcNAc...) asparagine glycan. 3 cysteine pairs are disulfide-bonded: cysteine 192–cysteine 197, cysteine 199–cysteine 220, and cysteine 240–cysteine 247.

Belongs to the polysaccharide monooxygenase AA14 family. It depends on Cu(2+) as a cofactor.

The protein resides in the secreted. In terms of biological role, lytic polysaccharide monooxygenase (LPMO) that is active against heteroxylan, xyloglucan and cellulose in beta-cellulose and released native oligosaccharides and corresponding C1- and/or C4-oxidized products. May act mainly on heteroxylan with numerous arabinosyl substituents between cellulose fibers rather than on recalcitrant xylan tightly associated with cellulose. Catalysis by LPMOs requires the reduction of the active-site copper from Cu(II) to Cu(I) by a reducing agent and H(2)O(2) or O(2) as a cosubstrate. Shows a branched chain preference, and has synergistic effects with the Penicillium parvum debranching enzyme ABF62C in an enzyme- and ascorbic acid-dependent manner. Also has synergistic effects with the Penicillium parvum GH10 endoxylanase XYN1, and the degree of synergy was greater with step-by-step addition than with simultaneous addition. This chain is AA14 family lytic polysaccharide monooxygenase, found in Sordaria brevicollis.